The primary structure comprises 535 residues: Dual specificity calcium/calmodulin-dependent 3',5'-cyclic nucleotide phosphodiesterase 1B (535 aa).

The segment at 1–21 is disordered; sequence MELSPRSPPEMLESDCPSPLE. Residues S7 and S14 each carry the phosphoserine modification. Calmodulin-binding stretches follow at residues 27 to 47 and 117 to 140; these read SKKM…QLEN and EKPK…MFRR. In terms of domain architecture, PDEase spans 145–502; sequence VGPTYSTAVH…QKWKERAASG (358 aa). Residue H222 is the Proton donor of the active site. Zn(2+)-binding residues include H226, H262, D263, and D369. Residue D263 coordinates Mg(2+). Disordered regions lie at residues 444–474 and 495–535; these read QPLA…GDPN and WKER…GNLD. The segment covering 454-463 has biased composition (polar residues); sequence KSQPSFQWRQ. A phosphoserine mark is found at S465 and S513.

It belongs to the cyclic nucleotide phosphodiesterase family. PDE1 subfamily. In terms of assembly, homodimer. Zn(2+) serves as cofactor. The cofactor is Mg(2+).

The protein localises to the cytoplasm. It localises to the cytosol. The catalysed reaction is a nucleoside 3',5'-cyclic phosphate + H2O = a nucleoside 5'-phosphate + H(+). The enzyme catalyses 3',5'-cyclic GMP + H2O = GMP + H(+). It carries out the reaction 3',5'-cyclic AMP + H2O = AMP + H(+). With respect to regulation, type I PDE are activated by the binding of calmodulin in the presence of Ca(2+). Functionally, cyclic nucleotide phosphodiesterase with a dual specificity for the second messengers cAMP and cGMP, which are key regulators of many important physiological processes. Has a preference for cGMP as a substrate. This chain is Dual specificity calcium/calmodulin-dependent 3',5'-cyclic nucleotide phosphodiesterase 1B, found in Mus musculus (Mouse).